The chain runs to 247 residues: Myelin-oligodendrocyte glycoprotein (247 aa).

Positions 1-29 (MASLSRPSLPSCLCSFLLLLLLQVSSSYA) are cleaved as a signal peptide. The Extracellular portion of the chain corresponds to 30-154 (GQFRVIGPRH…EDPFYWVSPG (125 aa)). In terms of domain architecture, Ig-like V-type spans 32 to 145 (FRVIGPRHPI…EEAAMELKVE (114 aa)). C53 and C127 are joined by a disulfide. N-linked (GlcNAc...) asparagine glycosylation occurs at N60. Residues 155–175 (VLVLLAVLPVLLLQITVGLIF) traverse the membrane as a helical segment. Residues 176–210 (LCLQYRLRGKLRAEIENLHRTFDPHFLRVPCWKIT) lie on the Cytoplasmic side of the membrane. Residues 211 to 231 (LFVIVPVLGPLVALIICYNWL) traverse the membrane as a helical segment. Topologically, residues 232-247 (HRRLAGQFLEELRNPF) are extracellular.

It belongs to the immunoglobulin superfamily. BTN/MOG family. In terms of assembly, homodimer. May form heterodimers between the different isoforms. (Microbial infection) Interacts with rubella virus E2 glycoprotein. Found exclusively in the CNS, where it is localized on the surface of myelin and oligodendrocyte cytoplasmic membranes.

The protein resides in the cell membrane. Mediates homophilic cell-cell adhesion. Minor component of the myelin sheath. May be involved in completion and/or maintenance of the myelin sheath and in cell-cell communication. In terms of biological role, (Microbial infection) Acts as a receptor for rubella virus. In Homo sapiens (Human), this protein is Myelin-oligodendrocyte glycoprotein (MOG).